Consider the following 2390-residue polypeptide: Spectrin beta chain, non-erythrocytic 2 (2390 aa).

An N-acetylserine modification is found at S2. Positions 2–278 (SSTLSPTDFD…IITYVATYYH (277 aa)) are actin-binding. A phosphoserine mark is found at S6 and S31. Calponin-homology (CH) domains lie at 57–161 (AVQK…LRFQ) and 176–281 (KSAK…HYFS). Spectrin repeat units lie at residues 306–414 (LVEK…LALR), 427–527 (AARF…RERL), 532–639 (ELQK…RLEE), 642–744 (RLWR…QRLA), 749–849 (LYQF…RALE), and 855–954 (YTML…KAAL). Position 959 is a phosphoserine (S959). 11 Spectrin repeats span residues 960 to 1063 (IQNY…SLGE), 1066 to 1169 (RLQD…GRLA), 1174 to 1262 (FQGF…RHKK), 1279 to 1379 (EQQH…ARSL), 1384 to 1485 (RAEL…RRLQ), 1489 to 1586 (EQHQ…RLED), 1589 to 1692 (RAQQ…RLQE), 1696 to 1797 (LCQL…GQVL), 1801 to 1904 (YELQ…QLLL), 1910 to 2010 (FRFF…DWLQ), and 2017 to 2076 (VFGR…EKLT). S1073 carries the phosphoserine modification. The span at 2081–2096 (REKERKRKREEEERRK) shows a compositional bias: basic and acidic residues. 2 disordered regions span residues 2081–2222 (REKE…EQME) and 2331–2390 (SSAS…KKNK). Over residues 2116 to 2125 (QTASDTTWDG) the composition is skewed to polar residues. 2 positions are modified to phosphoserine: S2171 and S2199. The region spanning 2218–2328 (QEQMEGMLCR…WLRVVNAAIA (111 aa)) is the PH domain. T2354 carries the post-translational modification Phosphothreonine. Residue S2359 is modified to Phosphoserine. Residues 2370-2383 (RSKDGREREREKRF) show a composition bias toward basic and acidic residues.

This sequence belongs to the spectrin family. Highly expressed in brain, kidney, pancreas, and liver, and at lower levels in lung and placenta.

Its subcellular location is the cytoplasm. It localises to the cytoskeleton. The protein resides in the cell cortex. Functionally, probably plays an important role in neuronal membrane skeleton. This Homo sapiens (Human) protein is Spectrin beta chain, non-erythrocytic 2 (SPTBN2).